The sequence spans 509 residues: Cardiolipin synthase 1 (509 aa).

3 helical membrane passes run 4-24 (PIVQLLLIFTIVSIVLFLLNT), 30-50 (YTFVGALWSITIVGISFVIFI), and 59-79 (LAWFLVLALLPIIGVLLYAIF). PLD phosphodiesterase domains are found at residues 238–265 (VNYRNHRKIVIVDGEIGFTGGLNVGDEY) and 422–449 (KDGFMHAKIVLVDDTIATIGTANMDVRS). Catalysis depends on residues H243, K245, D250, H427, K429, and D434.

It belongs to the phospholipase D family. Cardiolipin synthase subfamily.

The protein localises to the cell membrane. The enzyme catalyses 2 a 1,2-diacyl-sn-glycero-3-phospho-(1'-sn-glycerol) = a cardiolipin + glycerol. Its function is as follows. Catalyzes the reversible phosphatidyl group transfer from one phosphatidylglycerol molecule to another to form cardiolipin (CL) (diphosphatidylglycerol) and glycerol. The polypeptide is Cardiolipin synthase 1 (cls1) (Bacillus cereus (strain ATCC 14579 / DSM 31 / CCUG 7414 / JCM 2152 / NBRC 15305 / NCIMB 9373 / NCTC 2599 / NRRL B-3711)).